The following is a 410-amino-acid chain: 2-oxoisovalerate dehydrogenase subunit alpha (410 aa).

It belongs to the BCKDHA family. As to quaternary structure, heterodimer of an alpha and a beta chain. It depends on thiamine diphosphate as a cofactor.

It carries out the reaction N(6)-[(R)-lipoyl]-L-lysyl-[protein] + 3-methyl-2-oxobutanoate + H(+) = N(6)-[(R)-S(8)-2-methylpropanoyldihydrolipoyl]-L-lysyl-[protein] + CO2. In terms of biological role, the branched-chain alpha-keto dehydrogenase complex catalyzes the overall conversion of alpha-keto acids to acyl-CoA and CO(2). It contains multiple copies of three enzymatic components: branched-chain alpha-keto acid decarboxylase (E1), lipoamide acyltransferase (E2) and lipoamide dehydrogenase (E3). This chain is 2-oxoisovalerate dehydrogenase subunit alpha (bkdA1), found in Pseudomonas putida (Arthrobacter siderocapsulatus).